The chain runs to 364 residues: GDSL esterase/lipase EXL3 (364 aa).

Positions 1–32 (MKDNSSWSCSCSWSSWKICLLSVLFLTETITA) are cleaved as a signal peptide. Residue S50 is the Nucleophile of the active site. Residues D339 and H342 contribute to the active site.

The protein belongs to the 'GDSL' lipolytic enzyme family. As to expression, flower buds.

The protein resides in the secreted. The polypeptide is GDSL esterase/lipase EXL3 (EXL3) (Arabidopsis thaliana (Mouse-ear cress)).